The primary structure comprises 429 residues: UDP-N-acetylglucosamine 1-carboxyvinyltransferase (429 aa).

Residue 22–23 (KN) coordinates phosphoenolpyruvate. Arg-93 lines the UDP-N-acetyl-alpha-D-glucosamine pocket. The active-site Proton donor is the Cys-117. Cys-117 is modified (2-(S-cysteinyl)pyruvic acid O-phosphothioketal). UDP-N-acetyl-alpha-D-glucosamine-binding positions include 122–126 (RPVDL), Asp-307, and Val-329.

It belongs to the EPSP synthase family. MurA subfamily.

It localises to the cytoplasm. The catalysed reaction is phosphoenolpyruvate + UDP-N-acetyl-alpha-D-glucosamine = UDP-N-acetyl-3-O-(1-carboxyvinyl)-alpha-D-glucosamine + phosphate. Its pathway is cell wall biogenesis; peptidoglycan biosynthesis. Functionally, cell wall formation. Adds enolpyruvyl to UDP-N-acetylglucosamine. This is UDP-N-acetylglucosamine 1-carboxyvinyltransferase from Chloroherpeton thalassium (strain ATCC 35110 / GB-78).